We begin with the raw amino-acid sequence, 255 residues long: MLLTIDIGNTNIKIGAYQGERLTAHWRVTTERHRLADEYLVLLHNLFDLGGIDPRHIDGCAISCVVPPLTGEFRALCHKYFRVDPLMVNASTPTGLQYKVDAPAELGADRIANSLAAFRRYGGPVIVLAFGTATTFDVITATGEYIGGAIAPGIGISADALFRLAAKLYQVELVRPPKVIGTNTIHHMQSGVILGYAGLVEGLVRRMQAELGTSCPVVATGGLAELIAAETEAITTVEPYLTLDGLRLIYEMNRQ.

Residue 6–13 (DIGNTNIK) coordinates ATP. Residue 107–110 (GADR) coordinates substrate. Asp-109 serves as the catalytic Proton acceptor. An ATP-binding site is contributed by Thr-132. Residue Thr-184 participates in substrate binding.

It belongs to the type III pantothenate kinase family. Homodimer. The cofactor is NH4(+). It depends on K(+) as a cofactor.

Its subcellular location is the cytoplasm. It catalyses the reaction (R)-pantothenate + ATP = (R)-4'-phosphopantothenate + ADP + H(+). The protein operates within cofactor biosynthesis; coenzyme A biosynthesis; CoA from (R)-pantothenate: step 1/5. Its function is as follows. Catalyzes the phosphorylation of pantothenate (Pan), the first step in CoA biosynthesis. The protein is Type III pantothenate kinase of Roseiflexus castenholzii (strain DSM 13941 / HLO8).